We begin with the raw amino-acid sequence, 429 residues long: Phosphomethylpyrimidine synthase 1 (429 aa).

Residues N65, M94, Y123, H162, 184 to 186 (SRG), 225 to 228 (DGLR), and E264 each bind substrate. H268 lines the Zn(2+) pocket. Y291 contributes to the substrate binding site. H332 is a binding site for Zn(2+). 3 residues coordinate [4Fe-4S] cluster: C408, C411, and C415.

It belongs to the ThiC family. [4Fe-4S] cluster is required as a cofactor.

The catalysed reaction is 5-amino-1-(5-phospho-beta-D-ribosyl)imidazole + S-adenosyl-L-methionine = 4-amino-2-methyl-5-(phosphooxymethyl)pyrimidine + CO + 5'-deoxyadenosine + formate + L-methionine + 3 H(+). Its pathway is cofactor biosynthesis; thiamine diphosphate biosynthesis. Functionally, catalyzes the synthesis of the hydroxymethylpyrimidine phosphate (HMP-P) moiety of thiamine from aminoimidazole ribotide (AIR) in a radical S-adenosyl-L-methionine (SAM)-dependent reaction. The sequence is that of Phosphomethylpyrimidine synthase 1 from Methanosphaera stadtmanae (strain ATCC 43021 / DSM 3091 / JCM 11832 / MCB-3).